The following is a 325-amino-acid chain: DNA-directed RNA polymerase subunit alpha (325 aa).

Positions 1–231 (MQNSLLKPRI…DQLNVFAALE (231 aa)) are alpha N-terminal domain (alpha-NTD). An alpha C-terminal domain (alpha-CTD) region spans residues 246 to 325 (VDPILLRPVD…ENWPPAGLEK (80 aa)).

It belongs to the RNA polymerase alpha chain family. Homodimer. The RNAP catalytic core consists of 2 alpha, 1 beta, 1 beta' and 1 omega subunit. When a sigma factor is associated with the core the holoenzyme is formed, which can initiate transcription.

The enzyme catalyses RNA(n) + a ribonucleoside 5'-triphosphate = RNA(n+1) + diphosphate. In terms of biological role, DNA-dependent RNA polymerase catalyzes the transcription of DNA into RNA using the four ribonucleoside triphosphates as substrates. The chain is DNA-directed RNA polymerase subunit alpha from Janthinobacterium sp. (strain Marseille) (Minibacterium massiliensis).